Consider the following 207-residue polypeptide: Ribosomal RNA large subunit methyltransferase E (207 aa).

Positions 60, 62, 80, 96, and 121 each coordinate S-adenosyl-L-methionine. Catalysis depends on Lys161, which acts as the Proton acceptor.

The protein belongs to the class I-like SAM-binding methyltransferase superfamily. RNA methyltransferase RlmE family.

It is found in the cytoplasm. The enzyme catalyses uridine(2552) in 23S rRNA + S-adenosyl-L-methionine = 2'-O-methyluridine(2552) in 23S rRNA + S-adenosyl-L-homocysteine + H(+). In terms of biological role, specifically methylates the uridine in position 2552 of 23S rRNA at the 2'-O position of the ribose in the fully assembled 50S ribosomal subunit. The protein is Ribosomal RNA large subunit methyltransferase E of Pseudomonas paraeruginosa (strain DSM 24068 / PA7) (Pseudomonas aeruginosa (strain PA7)).